Reading from the N-terminus, the 330-residue chain is D-lactate dehydrogenase (330 aa).

NAD(+) contacts are provided by residues 155–156 (RI), D175, 206–207 (MP), N212, 233–235 (MAR), and D259. The active site involves R235. E264 is an active-site residue. The Proton donor role is filled by H296.

Belongs to the D-isomer specific 2-hydroxyacid dehydrogenase family.

The catalysed reaction is (R)-lactate + NAD(+) = pyruvate + NADH + H(+). This chain is D-lactate dehydrogenase (ldhD), found in Streptococcus pyogenes serotype M1.